We begin with the raw amino-acid sequence, 165 residues long: Peptide deformylase (165 aa).

Residues Cys-93 and His-135 each coordinate Fe cation. The active site involves Glu-136. Position 139 (His-139) interacts with Fe cation.

Belongs to the polypeptide deformylase family. Requires Fe(2+) as cofactor.

It carries out the reaction N-terminal N-formyl-L-methionyl-[peptide] + H2O = N-terminal L-methionyl-[peptide] + formate. Functionally, removes the formyl group from the N-terminal Met of newly synthesized proteins. Requires at least a dipeptide for an efficient rate of reaction. N-terminal L-methionine is a prerequisite for activity but the enzyme has broad specificity at other positions. The protein is Peptide deformylase of Thermodesulfovibrio yellowstonii (strain ATCC 51303 / DSM 11347 / YP87).